Consider the following 681-residue polypeptide: U3 small nucleolar ribonucleoprotein protein MPP10 (681 aa).

3 positions are modified to phosphoserine: Ser61, Ser120, and Ser139. Positions Ser105–Glu147 are enriched in acidic residues. 2 disordered regions span residues Ser105 to Asp202 and Asn216 to Gln364. Positions Glu109–Val138 form a coiled coil. Basic and acidic residues predominate over residues Met148–Lys162. Phosphoserine occurs at positions 163, 167, and 171. Positions Leu180–Gly190 are enriched in polar residues. 2 stretches are compositionally biased toward basic and acidic residues: residues Lys193–Asp202 and Asn216–Asp226. Residues Phe205 to Asp239 are a coiled coil. The segment covering Asn227–Gly247 has biased composition (acidic residues). At Ser242 the chain carries Phosphoserine. Residues Lys253 to Leu264 are compositionally biased toward basic residues. Ser275 and Ser289 each carry phosphoserine. Basic and acidic residues predominate over residues Thr280–Asn290. Coiled coils occupy residues Asp284–His324 and Asn348–Lys382. Acidic residues predominate over residues Lys291–Asn318. Residues Glu319 to Lys329 are compositionally biased toward basic and acidic residues. Lys350 participates in a covalent cross-link: Glycyl lysine isopeptide (Lys-Gly) (interchain with G-Cter in SUMO2). A compositionally biased stretch (basic and acidic residues) spans Lys351–Gln364. Residues Lys382 and Lys394 each participate in a glycyl lysine isopeptide (Lys-Gly) (interchain with G-Cter in SUMO2) cross-link. Positions Leu469 to Asn490 form a coiled coil. A Glycyl lysine isopeptide (Lys-Gly) (interchain with G-Cter in SUMO2) cross-link involves residue Lys555. Positions Asn558–Lys575 are enriched in basic and acidic residues. The interval Asn558 to Gln606 is disordered. Positions Lys574–Val604 form a coiled coil. A compositionally biased stretch (basic residues) spans Arg576–Leu598. Lys609 is subject to N6-acetyllysine. Residues Lys632 and Lys649 each participate in a glycyl lysine isopeptide (Lys-Gly) (interchain with G-Cter in SUMO2) cross-link. Positions Ser648–Lys670 form a coiled coil. Positions Asp660–Leu681 are disordered. Positions Gln672 to Leu681 are enriched in basic and acidic residues.

Belongs to the MPP10 family. Part of the small subunit (SSU) processome, composed of more than 70 proteins and the RNA chaperone small nucleolar RNA (snoRNA) U3. Component of a heterotrimeric complex containing IMP3, IMP4 and MPHOSPH10. Interacts with IMP3 and IMP4. In terms of processing, phosphorylated in M (mitotic) phase.

The protein localises to the nucleus. Its subcellular location is the nucleolus. It is found in the chromosome. In terms of biological role, component of the 60-80S U3 small nucleolar ribonucleoprotein (U3 snoRNP). Required for the early cleavages during pre-18S ribosomal RNA processing. Part of the small subunit (SSU) processome, first precursor of the small eukaryotic ribosomal subunit. During the assembly of the SSU processome in the nucleolus, many ribosome biogenesis factors, an RNA chaperone and ribosomal proteins associate with the nascent pre-rRNA and work in concert to generate RNA folding, modifications, rearrangements and cleavage as well as targeted degradation of pre-ribosomal RNA by the RNA exosome. The polypeptide is U3 small nucleolar ribonucleoprotein protein MPP10 (Homo sapiens (Human)).